The chain runs to 623 residues: Glutathione import ATP-binding protein GsiA (623 aa).

ABC transporter domains follow at residues 15 to 269 (VENL…RALL) and 314 to 564 (LRVR…RKLL). ATP contacts are provided by residues 49-56 (GESGSGKS) and 357-364 (GESGSGKS).

It belongs to the ABC transporter superfamily. Glutathione importer (TC 3.A.1.5.11) family. The complex is composed of two ATP-binding proteins (GsiA), two transmembrane proteins (GsiC and GsiD) and a solute-binding protein (GsiB).

The protein resides in the cell inner membrane. It catalyses the reaction glutathione(out) + ATP + H2O = glutathione(in) + ADP + phosphate + H(+). Functionally, part of the ABC transporter complex GsiABCD involved in glutathione import. Responsible for energy coupling to the transport system. This chain is Glutathione import ATP-binding protein GsiA, found in Shigella dysenteriae serotype 1 (strain Sd197).